The chain runs to 310 residues: Glycerol-3-phosphate dehydrogenase [NAD(P)+] (310 aa).

4 residues coordinate NADPH: W14, R34, R35, and K82. Residues K82 and G110 each contribute to the sn-glycerol 3-phosphate site. S114 serves as a coordination point for NADPH. Residues K165, D218, S228, R229, and N230 each contribute to the sn-glycerol 3-phosphate site. The Proton acceptor role is filled by K165. R229 is an NADPH binding site. NADPH is bound at residue E255.

Belongs to the NAD-dependent glycerol-3-phosphate dehydrogenase family.

Its subcellular location is the cytoplasm. The catalysed reaction is sn-glycerol 3-phosphate + NAD(+) = dihydroxyacetone phosphate + NADH + H(+). It catalyses the reaction sn-glycerol 3-phosphate + NADP(+) = dihydroxyacetone phosphate + NADPH + H(+). Its pathway is membrane lipid metabolism; glycerophospholipid metabolism. Catalyzes the reduction of the glycolytic intermediate dihydroxyacetone phosphate (DHAP) to sn-glycerol 3-phosphate (G3P), the key precursor for phospholipid synthesis. The chain is Glycerol-3-phosphate dehydrogenase [NAD(P)+] from Acaryochloris marina (strain MBIC 11017).